Here is a 637-residue protein sequence, read N- to C-terminus: ATP-dependent rRNA helicase SPB4 (637 aa).

The short motif at 14 to 42 (WDTLNPPLSEWIRDAVATMGFDQMTPVQA) is the Q motif element. Positions 45–247 (LPHFMGNKDV…RVGLRNPVKI (203 aa)) constitute a Helicase ATP-binding domain. Residue 58 to 65 (AVTGSGKT) coordinates ATP. Residues 195 to 198 (DEAD) carry the DEAD box motif. One can recognise a Helicase C-terminal domain in the interval 283 to 438 (ALAELLRQLP…TITTSEDDAA (156 aa)). Positions 524-631 (KEKTREQQRK…AAAKQEKDGE (108 aa)) form a coiled coil. Composition is skewed to basic and acidic residues over residues 535–553 (ALEE…EEFK), 563–576 (SAKH…VERR), 583–618 (RDAE…EKAA), and 625–637 (KQEK…GFDD). The segment at 535-637 (ALEEEKSGVK…KDGEFKGFDD (103 aa)) is disordered.

Belongs to the DEAD box helicase family. DDX55/SPB4 subfamily. As to quaternary structure, component of pre-60S ribosomal complexes.

The protein resides in the nucleus. It is found in the nucleolus. The enzyme catalyses ATP + H2O = ADP + phosphate + H(+). In terms of biological role, ATP-binding RNA helicase involved in the biogenesis of 60S ribosomal subunits. Binds 90S pre-ribosomal particles and dissociates from pre-60S ribosomal particles after processing of 27SB pre-rRNA. Required for the normal formation of 18S rRNA through the processing of pre-rRNAs at sites A0, A1 and A2, and the normal formation of 25S and 5.8S rRNAs through the processing of pre-rRNAs at sites C1 and C2. This chain is ATP-dependent rRNA helicase SPB4, found in Gibberella zeae (strain ATCC MYA-4620 / CBS 123657 / FGSC 9075 / NRRL 31084 / PH-1) (Wheat head blight fungus).